A 941-amino-acid chain; its full sequence is Myosin heavy chain kinase D (941 aa).

Residues 8–48 are a coiled coil; that stretch reads KLSKKIEKILEKNDYLKKKVEQLTKSVDNHEFKIQELLLLL. 3 stretches are compositionally biased toward low complexity: residues 57–70, 84–115, and 124–206; these read TTTTTTTTTNNNST, TSTDSMTNSNNSSATSSTTPSPTQTSTITTTS, and NSNN…PQLS. Disordered regions lie at residues 57 to 234 and 276 to 310; these read TTTT…KEDS and SSNNTDSTNNDNSSILNDQQNQQQNQQQQNQQQQQ. Positions 289 to 317 form a coiled coil; sequence SILNDQQNQQQNQQQQNQQQQQEEINFIT. The Alpha-type protein kinase domain occupies 337–582; it reads EYSANDDEWT…ICLQFGLPPI (246 aa). WD repeat units follow at residues 635–674, 683–720, 741–780, 783–820, 824–861, 864–902, and 909–941; these read GHDERVCSLLINQDKTKLYSASADGYVKIWNLTNNEDLSK, AHRRSIEKMLLNEKYLFTASSDGTIKIWSLPTTTTTTT, DHTAEVNDMCIDIENNFLVSCSFDKQIKIYDLSTFKCIKS, AHGKSIKSIYMSGKYLFSSSNDQSIKIWDLEMCMCVYG, AHDAPITSLRMFGNRLFSASKDGEIKDWNLSTFQPTTT, QHNMAITDILVTSNGYLFVSSDDSTIRIIDISNQNEPIK, and AHRSGVNSLATDGKRIFSGGCDNLIKVWNWKNK.

The protein belongs to the protein kinase superfamily. Alpha-type protein kinase family. ALPK subfamily.

It catalyses the reaction L-threonyl-[myosin heavy-chain] + ATP = O-phospho-L-threonyl-[myosin heavy-chain] + ADP + H(+). In terms of biological role, phosphorylates threonine. Not critical for regulating the assembly and disassembly of myosin II filament. This Dictyostelium discoideum (Social amoeba) protein is Myosin heavy chain kinase D (mhkD).